The following is a 594-amino-acid chain: Beta-mannosyltransferase 3 (594 aa).

Topologically, residues 1 to 6 (MRIRSN) are cytoplasmic. A helical transmembrane segment spans residues 7–27 (VLLLSTAGALALVWFAVVFSW). At 28-594 (DDKSIFGIPT…KDEVKDTKAK (567 aa)) the chain is on the extracellular side. Residue Asn-305 is glycosylated (N-linked (GlcNAc...) asparagine). The stretch at 512 to 594 (VTRGEEDRLK…KDEVKDTKAK (83 aa)) forms a coiled coil. Residues 517–558 (EDRLKNKEKERKIEEKRKKEEERKKKEEEKKKKEEEEKKKKE) show a composition bias toward basic and acidic residues. A disordered region spans residues 517–564 (EDRLKNKEKERKIEEKRKKEEERKKKEEEKKKKEEEEKKKKEEEEEEE).

It belongs to the BMT family.

It localises to the membrane. Its function is as follows. Beta-mannosyltransferase involved in cell wall biosynthesis. The protein is Beta-mannosyltransferase 3 (BMT3) of Komagataella phaffii (strain ATCC 76273 / CBS 7435 / CECT 11047 / NRRL Y-11430 / Wegner 21-1) (Yeast).